A 257-amino-acid polypeptide reads, in one-letter code: Adenylate kinase (257 aa).

Residue 52–57 participates in ATP binding; the sequence is GAGKGT. Positions 72–101 are NMP; it reads ATGDMLRSQVAKKTELGKEAKKIMDQGGLV. AMP contacts are provided by residues T73, R78, 99-101, 128-131, and Q135; these read GLV and GFPR. The LID stretch occupies residues 169-206; it reads GRLVHPASGRSYHKIFNPPKNDMKDDVTGEPLIQRSDD. ATP-binding positions include R170 and 179–180; that span reads SY. AMP-binding residues include R203 and R214. Residue Q242 participates in ATP binding.

Belongs to the adenylate kinase family. AK2 subfamily. Monomer.

The protein resides in the cytoplasm. It is found in the cytosol. It localises to the mitochondrion intermembrane space. It catalyses the reaction AMP + ATP = 2 ADP. In terms of biological role, catalyzes the reversible transfer of the terminal phosphate group between ATP and AMP. Plays an important role in cellular energy homeostasis and in adenine nucleotide metabolism. Adenylate kinase activity is critical for regulation of the phosphate utilization and the AMP de novo biosynthesis pathways. The protein is Adenylate kinase (adk1) of Aspergillus fumigatus (strain CBS 144.89 / FGSC A1163 / CEA10) (Neosartorya fumigata).